The chain runs to 132 residues: Fatty acid-binding protein (132 aa).

Residues Arg-107 and 127-129 (RNY) each bind (5Z,8Z,11Z,14Z)-eicosatetraenoate. (9Z)-octadecenoate is bound by residues Arg-107 and 127–129 (RNY).

The protein belongs to the calycin superfamily. Fatty-acid binding protein (FABP) family.

The protein localises to the cytoplasm. In terms of biological role, may play a role in the transport of fatty acids. Binds to various fatty acids but not retinoids. This Schistosoma japonicum (Blood fluke) protein is Fatty acid-binding protein.